We begin with the raw amino-acid sequence, 225 residues long: Small ribosomal subunit protein uS7 (225 aa).

Belongs to the universal ribosomal protein uS7 family. Component of the small ribosomal subunit. Mature ribosomes consist of a small (40S) and a large (60S) subunit. The 40S subunit contains about 32 different proteins and 1 molecule of RNA (18S). The 60S subunit contains 45 different proteins and 3 molecules of RNA (25S, 5.8S and 5S).

It is found in the cytoplasm. Component of the ribosome, a large ribonucleoprotein complex responsible for the synthesis of proteins in the cell. The small ribosomal subunit (SSU) binds messenger RNAs (mRNAs) and translates the encoded message by selecting cognate aminoacyl-transfer RNA (tRNA) molecules. The large subunit (LSU) contains the ribosomal catalytic site termed the peptidyl transferase center (PTC), which catalyzes the formation of peptide bonds, thereby polymerizing the amino acids delivered by tRNAs into a polypeptide chain. The nascent polypeptides leave the ribosome through a tunnel in the LSU and interact with protein factors that function in enzymatic processing, targeting, and the membrane insertion of nascent chains at the exit of the ribosomal tunnel. This is Small ribosomal subunit protein uS7 (RPS5) from Candida albicans (strain SC5314 / ATCC MYA-2876) (Yeast).